The sequence spans 601 residues: Probable HECT-type ubiquitin ligase-interacting protein creD (601 aa).

Disordered regions lie at residues 374–397 (EVDPSGYRTPGPGSGPGTPFGTLS) and 454–496 (VSTD…GMAT). The span at 455 to 473 (STDSFGPSSGSNSQSPASP) shows a compositional bias: low complexity. Over residues 475-489 (LSRRPSDEGYHDHDY) the composition is skewed to basic and acidic residues.

The protein belongs to the arrestin family. Interacts with hulA.

In terms of biological role, component of the regulatory network controlling carbon source utilization through ubiquitination and deubiquitination involving creA, creB, creC, creD and acrB. May be involved in signaling by recognizing appropriately phosphorylated substrates via its arrestin domains and then recruit a HECT-type ubiquitin ligase such as hulA, leading to ubiquitination of the substrate, providing a link between ubiquitination and phosphorylation in protein regulation and stability. This Aspergillus fumigatus (strain CBS 144.89 / FGSC A1163 / CEA10) (Neosartorya fumigata) protein is Probable HECT-type ubiquitin ligase-interacting protein creD (creD).